We begin with the raw amino-acid sequence, 180 residues long: MFPMVTGFMSYGQQTIRATRYIGQSFITTLSHTNRLPITIHYPYEKSITPERFRGRIHFEFDKCIACEVCVRVCPIDLPVVDWRFEKDIKRKQLLNYSIDFGVCIFCGNCVEYCPTSCLSMTEEYELSTYDRHELNYNQIALSRLPISIMEDYTIQTIRNSTKSKIDEDKSSNSRTITDY.

4Fe-4S ferredoxin-type domains lie at 55 to 84 and 95 to 124; these read GRIH…VDWR and LNYS…MTEE. [4Fe-4S] cluster is bound by residues Cys-64, Cys-67, Cys-70, Cys-74, Cys-104, Cys-107, Cys-110, and Cys-114.

It belongs to the complex I 23 kDa subunit family. In terms of assembly, NDH is composed of at least 16 different subunits, 5 of which are encoded in the nucleus. The cofactor is [4Fe-4S] cluster.

The protein resides in the plastid. It localises to the chloroplast thylakoid membrane. It carries out the reaction a plastoquinone + NADH + (n+1) H(+)(in) = a plastoquinol + NAD(+) + n H(+)(out). It catalyses the reaction a plastoquinone + NADPH + (n+1) H(+)(in) = a plastoquinol + NADP(+) + n H(+)(out). Functionally, NDH shuttles electrons from NAD(P)H:plastoquinone, via FMN and iron-sulfur (Fe-S) centers, to quinones in the photosynthetic chain and possibly in a chloroplast respiratory chain. The immediate electron acceptor for the enzyme in this species is believed to be plastoquinone. Couples the redox reaction to proton translocation, and thus conserves the redox energy in a proton gradient. This is NAD(P)H-quinone oxidoreductase subunit I, chloroplastic from Agrostis stolonifera (Creeping bentgrass).